The chain runs to 314 residues: Protein phosphatase PTC7 homolog fig (314 aa).

One can recognise a PPM-type phosphatase domain in the interval 43 to 309 (PYLVTVVQGR…DDITLILSSV (267 aa)). Residues Asp87, Gly88, and Asp232 each coordinate Mn(2+).

It belongs to the PP2C family. The cofactor is Mg(2+). It depends on Mn(2+) as a cofactor.

The catalysed reaction is O-phospho-L-seryl-[protein] + H2O = L-seryl-[protein] + phosphate. It carries out the reaction O-phospho-L-threonyl-[protein] + H2O = L-threonyl-[protein] + phosphate. This is Protein phosphatase PTC7 homolog fig from Drosophila simulans (Fruit fly).